A 238-amino-acid polypeptide reads, in one-letter code: Flagellar L-ring protein (238 aa).

An N-terminal signal peptide occupies residues 1–16 (MNKAILAVAMVLLLAG). Cys-17 is lipidated: N-palmitoyl cysteine. Cys-17 carries S-diacylglycerol cysteine lipidation.

The protein belongs to the FlgH family. As to quaternary structure, the basal body constitutes a major portion of the flagellar organelle and consists of four rings (L,P,S, and M) mounted on a central rod.

It is found in the cell outer membrane. Its subcellular location is the bacterial flagellum basal body. Functionally, assembles around the rod to form the L-ring and probably protects the motor/basal body from shearing forces during rotation. This Brucella canis (strain ATCC 23365 / NCTC 10854 / RM-666) protein is Flagellar L-ring protein.